The chain runs to 490 residues: MSSPGDTAVLVLAAGPGTRMRSDTPKVLHPLGGRSMLSHLLHAIAKVAPQHLAVVLGHDHERIAPLIADWADDLGRPIDVALQERPRGTGDAVRCGLSALPDDYAGVLVVTSGDTPLLDADTVADLIAGHTATRAAVTVLTTTLSDPSGYGRILRTQDNEVTAIVEHADATESQREIREVNAGVYAFDTAALRSALNRLSADNAQQELYLTDVIAILRGDGLPIRARHVDDSALVAGVNNRVQLAQLGAELNRRIVAAHQLAGVTVVDPATTWIDVDVTIGRDTVIHPGTQLLGRTQIGGHCVVGPDTTLTDVSVGDGASVVRTHGTGSSVGAGATVGPFAYLRPGTVLGDDGKLGAFVETKNATIGTGTKVPHLTYVGDADIGEHSNIGASSVFVNYDGESKRRTTVGSHVRTGSDTMFVAPVTVGDGAYTGAGTVVREDVPPGALAVSAGPQRNIEGWVRRKRPGSAAARAAEAAEKAAGGRPAGEAE.

A pyrophosphorylase region spans residues 1–241; that stretch reads MSSPGDTAVL…SALVAGVNNR (241 aa). Residues 12–15, K26, Q83, 88–89, 112–114, G151, E166, N181, and N239 each bind UDP-N-acetyl-alpha-D-glucosamine; these read LAAG, GT, and SGD. D114 contributes to the Mg(2+) binding site. N239 serves as a coordination point for Mg(2+). A linker region spans residues 242–262; sequence VQLAQLGAELNRRIVAAHQLA. The N-acetyltransferase stretch occupies residues 263 to 490; that stretch reads GVTVVDPATT…AGGRPAGEAE (228 aa). R344 and K362 together coordinate UDP-N-acetyl-alpha-D-glucosamine. Catalysis depends on H374, which acts as the Proton acceptor. 2 residues coordinate UDP-N-acetyl-alpha-D-glucosamine: Y377 and N388. Acetyl-CoA is bound by residues A391, 397–398, S416, and A434; that span reads NY. The disordered stretch occupies residues 462 to 490; that stretch reads RRKRPGSAAARAAEAAEKAAGGRPAGEAE. Residues 467–490 show a composition bias toward low complexity; the sequence is GSAAARAAEAAEKAAGGRPAGEAE.

It in the N-terminal section; belongs to the N-acetylglucosamine-1-phosphate uridyltransferase family. In the C-terminal section; belongs to the transferase hexapeptide repeat family. In terms of assembly, homotrimer. Requires Mg(2+) as cofactor.

The protein localises to the cytoplasm. It carries out the reaction alpha-D-glucosamine 1-phosphate + acetyl-CoA = N-acetyl-alpha-D-glucosamine 1-phosphate + CoA + H(+). The enzyme catalyses N-acetyl-alpha-D-glucosamine 1-phosphate + UTP + H(+) = UDP-N-acetyl-alpha-D-glucosamine + diphosphate. Its pathway is nucleotide-sugar biosynthesis; UDP-N-acetyl-alpha-D-glucosamine biosynthesis; N-acetyl-alpha-D-glucosamine 1-phosphate from alpha-D-glucosamine 6-phosphate (route II): step 2/2. It participates in nucleotide-sugar biosynthesis; UDP-N-acetyl-alpha-D-glucosamine biosynthesis; UDP-N-acetyl-alpha-D-glucosamine from N-acetyl-alpha-D-glucosamine 1-phosphate: step 1/1. It functions in the pathway bacterial outer membrane biogenesis; LPS lipid A biosynthesis. Functionally, catalyzes the last two sequential reactions in the de novo biosynthetic pathway for UDP-N-acetylglucosamine (UDP-GlcNAc). The C-terminal domain catalyzes the transfer of acetyl group from acetyl coenzyme A to glucosamine-1-phosphate (GlcN-1-P) to produce N-acetylglucosamine-1-phosphate (GlcNAc-1-P), which is converted into UDP-GlcNAc by the transfer of uridine 5-monophosphate (from uridine 5-triphosphate), a reaction catalyzed by the N-terminal domain. This chain is Bifunctional protein GlmU, found in Mycolicibacterium paratuberculosis (strain ATCC BAA-968 / K-10) (Mycobacterium paratuberculosis).